Reading from the N-terminus, the 217-residue chain is 7-cyano-7-deazaguanine synthase (217 aa).

An ATP-binding site is contributed by 10–20; sequence FSGGQDSTTCL. 4 residues coordinate Zn(2+): Cys185, Cys194, Cys197, and Cys200.

The protein belongs to the QueC family. As to quaternary structure, homodimer. The cofactor is Zn(2+).

It carries out the reaction 7-carboxy-7-deazaguanine + NH4(+) + ATP = 7-cyano-7-deazaguanine + ADP + phosphate + H2O + H(+). Its pathway is purine metabolism; 7-cyano-7-deazaguanine biosynthesis. Its function is as follows. Catalyzes the ATP-dependent conversion of 7-carboxy-7-deazaguanine (CDG) to 7-cyano-7-deazaguanine (preQ(0)). The protein is 7-cyano-7-deazaguanine synthase of Streptococcus thermophilus (strain ATCC BAA-491 / LMD-9).